The chain runs to 101 residues: Signal recognition particle 19 kDa protein (101 aa).

It belongs to the SRP19 family. As to quaternary structure, part of the signal recognition particle protein translocation system, which is composed of SRP and FtsY. Archaeal SRP consists of a 7S RNA molecule of 300 nucleotides and two protein subunits: SRP54 and SRP19.

It localises to the cytoplasm. Functionally, involved in targeting and insertion of nascent membrane proteins into the cytoplasmic membrane. Binds directly to 7S RNA and mediates binding of the 54 kDa subunit of the SRP. This chain is Signal recognition particle 19 kDa protein, found in Methanosarcina acetivorans (strain ATCC 35395 / DSM 2834 / JCM 12185 / C2A).